The chain runs to 139 residues: ATP synthase epsilon chain (139 aa).

It belongs to the ATPase epsilon chain family. In terms of assembly, F-type ATPases have 2 components, CF(1) - the catalytic core - and CF(0) - the membrane proton channel. CF(1) has five subunits: alpha(3), beta(3), gamma(1), delta(1), epsilon(1). CF(0) has three main subunits: a, b and c.

It localises to the cell inner membrane. Its function is as follows. Produces ATP from ADP in the presence of a proton gradient across the membrane. This is ATP synthase epsilon chain from Escherichia coli O139:H28 (strain E24377A / ETEC).